A 785-amino-acid polypeptide reads, in one-letter code: Mitochondrial intermediate peptidase (785 aa).

A mitochondrion-targeting transit peptide spans 1–26 (MLKVTTSRPWVCSRCVRRQVQSRRRL). Positions 26–51 (LATASTQYRESRPVPVDNSAPGAKRD) are disordered. Histidine 566 serves as a coordination point for Zn(2+). The active site involves glutamate 567. Zn(2+) is bound by residues histidine 570 and histidine 573.

Belongs to the peptidase M3 family. The cofactor is Zn(2+).

Its subcellular location is the mitochondrion matrix. It catalyses the reaction Release of an N-terminal octapeptide as second stage of processing of some proteins imported into the mitochondrion.. Functionally, cleaves proteins, imported into the mitochondrion, to their mature size. While most mitochondrial precursor proteins are processed to the mature form in one step by mitochondrial processing peptidase (MPP), the sequential cleavage by MIP of an octapeptide after initial processing by MPP is a required step for a subgroup of nuclear-encoded precursor proteins destined for the matrix or the inner membrane. This chain is Mitochondrial intermediate peptidase (oct1), found in Botryotinia fuckeliana (strain B05.10) (Noble rot fungus).